The chain runs to 311 residues: Mas-related G-protein coupled receptor member E (311 aa).

Residues 1–25 (MEPREAGQHAGAADGAQEDVAFNLV) lie on the Extracellular side of the membrane. The chain crosses the membrane as a helical span at residues 26–46 (ILSLTEGLGLGGLLGNGAVLW). The Cytoplasmic portion of the chain corresponds to 47–63 (LLSSNVYRNPFAIYLLD). Residues 64–84 (VACADLIFLGCHMVAIIPDLL) form a helical membrane-spanning segment. Over 85–95 (QGRLDFPGFVQ) the chain is Extracellular. Residues 96 to 116 (TSLATLRFFCYIVGLSLLVAV) form a helical membrane-spanning segment. Topologically, residues 117–136 (SVEQCLAALFPAWYSCRRPR) are cytoplasmic. The helical transmembrane segment at 137 to 157 (HLTTCVCALTWACCLLLHLLL) threads the bilayer. Residues 158 to 177 (SGACTQFFGEPSRHLCRTLW) are Extracellular-facing. A helical transmembrane segment spans residues 178–198 (LVAAVLLAVLCCTMCGASLML). Topologically, residues 199 to 216 (LLQVERGPQRPPPRGFPT) are cytoplasmic. Residues 217 to 237 (LILLAVLLFLFCGLPFGIYWL) traverse the membrane as a helical segment. At 238–251 (SRNLLWHIPHYFYH) the chain is on the extracellular side. The chain crosses the membrane as a helical span at residues 252 to 272 (FSFLTAAVYCAAKPVVYFCLG). The Cytoplasmic portion of the chain corresponds to 273–311 (SAQGRRLPLRLVLQRALGDEAELGAVRETSRRGLVDIAA).

Belongs to the G-protein coupled receptor 1 family. Mas subfamily.

The protein resides in the cell membrane. Its function is as follows. Orphan receptor. May regulate nociceptor function and/or development, including the sensation or modulation of pain. This Macaca fascicularis (Crab-eating macaque) protein is Mas-related G-protein coupled receptor member E (MRGPRE).